A 222-amino-acid chain; its full sequence is Small ribosomal subunit protein uS2 (222 aa).

The protein belongs to the universal ribosomal protein uS2 family.

The chain is Small ribosomal subunit protein uS2 from Karelsulcia muelleri (strain GWSS) (Sulcia muelleri).